The chain runs to 132 residues: Large ribosomal subunit protein uL14 (132 aa).

The protein belongs to the universal ribosomal protein uL14 family. As to quaternary structure, part of the 50S ribosomal subunit. Forms a cluster with proteins L3 and L24e, part of which may contact the 16S rRNA in 2 intersubunit bridges.

Its function is as follows. Binds to 23S rRNA. Forms part of two intersubunit bridges in the 70S ribosome. This is Large ribosomal subunit protein uL14 from Methanobrevibacter smithii (strain ATCC 35061 / DSM 861 / OCM 144 / PS).